Consider the following 210-residue polypeptide: Molybdenum cofactor guanylyltransferase (210 aa).

GTP-binding positions include Leu-14 to Gly-16, Lys-27, Asn-55, Asp-73, and Asp-108. Asp-108 serves as a coordination point for Mg(2+).

The protein belongs to the MobA family. In terms of assembly, monomer. It depends on Mg(2+) as a cofactor.

The protein localises to the cytoplasm. The enzyme catalyses Mo-molybdopterin + GTP + H(+) = Mo-molybdopterin guanine dinucleotide + diphosphate. In terms of biological role, transfers a GMP moiety from GTP to Mo-molybdopterin (Mo-MPT) cofactor (Moco or molybdenum cofactor) to form Mo-molybdopterin guanine dinucleotide (Mo-MGD) cofactor. The polypeptide is Molybdenum cofactor guanylyltransferase (Rhodopseudomonas palustris (strain BisB5)).